We begin with the raw amino-acid sequence, 396 residues long: Tryptophan synthase beta chain (396 aa).

At Lys-88 the chain carries N6-(pyridoxal phosphate)lysine.

This sequence belongs to the TrpB family. In terms of assembly, tetramer of two alpha and two beta chains. Requires pyridoxal 5'-phosphate as cofactor.

The enzyme catalyses (1S,2R)-1-C-(indol-3-yl)glycerol 3-phosphate + L-serine = D-glyceraldehyde 3-phosphate + L-tryptophan + H2O. It participates in amino-acid biosynthesis; L-tryptophan biosynthesis; L-tryptophan from chorismate: step 5/5. Its function is as follows. The beta subunit is responsible for the synthesis of L-tryptophan from indole and L-serine. This Actinobacillus pleuropneumoniae serotype 3 (strain JL03) protein is Tryptophan synthase beta chain.